The chain runs to 230 residues: Ribulose-phosphate 3-epimerase (230 aa).

Ser-10 contacts substrate. A divalent metal cation contacts are provided by His-35, Asp-37, and His-68. Asp-37 acts as the Proton acceptor in catalysis. Substrate is bound by residues His-68, 146–149 (GFGG), 179–181 (DGG), and 201–202 (GS). Asp-179 lines the a divalent metal cation pocket. Asp-179 (proton donor) is an active-site residue.

This sequence belongs to the ribulose-phosphate 3-epimerase family. As to quaternary structure, homohexamer. It depends on a divalent metal cation as a cofactor.

The catalysed reaction is D-ribulose 5-phosphate = D-xylulose 5-phosphate. It functions in the pathway carbohydrate degradation. In terms of biological role, catalyzes the reversible epimerization of D-ribulose 5-phosphate to D-xylulose 5-phosphate. The polypeptide is Ribulose-phosphate 3-epimerase (Synechocystis sp. (strain ATCC 27184 / PCC 6803 / Kazusa)).